A 78-amino-acid polypeptide reads, in one-letter code: Large ribosomal subunit protein bL28 (78 aa).

The tract at residues 1–20 is disordered; the sequence is MSRVCQVTSKRPAVGNNRSH.

This sequence belongs to the bacterial ribosomal protein bL28 family.

The sequence is that of Large ribosomal subunit protein bL28 from Haemophilus ducreyi (strain 35000HP / ATCC 700724).